A 66-amino-acid chain; its full sequence is Type 3 secretion system chaperone YscE (66 aa).

The protein belongs to the YscE family. In terms of assembly, component of the heterodimeric YscE-YscG chaperone. The YscE-YscG chaperone forms a stable ternary complex with YscF/SctF.

The protein localises to the cytoplasm. In terms of biological role, chaperone of the type III secretion system (T3SS), also called injectisome, which is used to inject bacterial effector proteins into eukaryotic host cells. Along with YscG, prevents premature polymerization of the YscF/SctF needle protein within the cytoplasm. Required for Yop secretion. This Yersinia enterocolitica protein is Type 3 secretion system chaperone YscE.